The sequence spans 458 residues: Adenylosuccinate synthetase (458 aa).

GTP is bound by residues 17-23 (GDEGKGK) and 45-47 (GHT). Aspartate 18 acts as the Proton acceptor in catalysis. Residues aspartate 18 and glycine 45 each coordinate Mg(2+). Residues 18-21 (DEGK), 43-46 (NAGH), threonine 137, arginine 151, glutamine 247, threonine 262, and arginine 330 contribute to the IMP site. Histidine 46 acts as the Proton donor in catalysis. Substrate is bound at residue 326-332 (VTTGRSR). Residues arginine 332, 358-360 (KLD), and 440-442 (STS) each bind GTP.

Belongs to the adenylosuccinate synthetase family. In terms of assembly, homodimer. Mg(2+) serves as cofactor.

The protein localises to the cytoplasm. The catalysed reaction is IMP + L-aspartate + GTP = N(6)-(1,2-dicarboxyethyl)-AMP + GDP + phosphate + 2 H(+). The protein operates within purine metabolism; AMP biosynthesis via de novo pathway; AMP from IMP: step 1/2. Its function is as follows. Plays an important role in the de novo pathway of purine nucleotide biosynthesis. Catalyzes the first committed step in the biosynthesis of AMP from IMP. The polypeptide is Adenylosuccinate synthetase (Acidovorax ebreus (strain TPSY) (Diaphorobacter sp. (strain TPSY))).